The sequence spans 383 residues: Creatine kinase, testis isozyme (383 aa).

The 87-residue stretch at 14-100 (KRLSPEEEFP…LDPIIEDRHG (87 aa)) folds into the Phosphagen kinase N-terminal domain. Positions 99–112 (HGGYKPTDKHKTDL) are enriched in basic and acidic residues. The disordered stretch occupies residues 99-119 (HGGYKPTDKHKTDLNPDNLKG). In terms of domain architecture, Phosphagen kinase C-terminal spans 127-369 (YVISSRVRTG…KLLVEMEKKL (243 aa)). Residues 130 to 134 (SSRVR), His193, Arg238, Arg294, 322 to 327 (RGTGGV), and Asp337 each bind ATP.

This sequence belongs to the ATP:guanido phosphotransferase family. In terms of tissue distribution, exists in many tissues, but preferentially in testis.

It catalyses the reaction creatine + ATP = N-phosphocreatine + ADP + H(+). Its function is as follows. Reversibly catalyzes the transfer of phosphate between ATP and various phosphogens (e.g. creatine phosphate). Creatine kinase isoenzymes play a central role in energy transduction in tissues with large, fluctuating energy demands, such as skeletal muscle, heart, brain and spermatozoa. This Oncorhynchus mykiss (Rainbow trout) protein is Creatine kinase, testis isozyme (tck1).